Reading from the N-terminus, the 138-residue chain is Large ribosomal subunit protein uL16 (138 aa).

The segment covering 1–13 has biased composition (basic residues); sequence MLQPARRKYRKEQ. The disordered stretch occupies residues 1–21; that stretch reads MLQPARRKYRKEQKGRNTGIA.

The protein belongs to the universal ribosomal protein uL16 family. Part of the 50S ribosomal subunit.

Binds 23S rRNA and is also seen to make contacts with the A and possibly P site tRNAs. This is Large ribosomal subunit protein uL16 from Albidiferax ferrireducens (strain ATCC BAA-621 / DSM 15236 / T118) (Rhodoferax ferrireducens).